We begin with the raw amino-acid sequence, 698 residues long: MPSDVRSLLAGTRNIGIMAHIDAGKTTTTERILFYTGVNYKIGEVHEGGATMDWMEQEQERGITITSAATTCLWRDHTINIIDTPGHVDFTVEVERSLRVLDGAVAVFDAVAGVEPQSETVWKQADRYNVPRIAFVNKMDRVGAEFHRCVEMMIDRLDATPAVIQLPWGVEADFRGVIDLVRMKGLLWKTEDKGASYETVDIPRDHLEAAQEWRDKLLETVAENDDELMELYLEGEEPSTEQLVAALRRATLASKVNPVLCGSAFKNKGVQPMLDAVVDFLPNPLDIGATVGHAVGDEETEVRREPSEDEPFSALAFKIMSDPYVGKLTYIRVYSGKLTGGSPVLNSTKDRKERVGRILQMHANHREDREGVGAGQIVAVVGLKNTTTGDTLCDPNAPVILESMTFPAPVIHVAIEPKTKADQQKLGTAIQRLAEEDPTFQVRTDEETGQTIIAGMGELHLDVLVDRMRREFGVEANVGKPQVAYRETIRRKVEKVDYTHKKQTGGSGQYARVIINLEPSGGDGGGYEFENKVTGGRIPREYIPSVDAGCQEAMEFGVLAGYPLVDVKVTLLDGQFHDVDSSELAFKIAGSMAFKDAARKADPVLLEPLMAVEVTTPEDHMGDVIGDLNSRRGQIQAMEERGGSRIVRALVPLSEMFGYVGDLRSKTSGRASYSMQFDSYAEVPANVAKEIIAKARGE.

Residues 10 to 285 (AGTRNIGIMA…AVVDFLPNPL (276 aa)) enclose the tr-type G domain. GTP-binding positions include 19-26 (AHIDAGKT), 83-87 (DTPGH), and 137-140 (NKMD).

The protein belongs to the TRAFAC class translation factor GTPase superfamily. Classic translation factor GTPase family. EF-G/EF-2 subfamily.

The protein resides in the cytoplasm. Catalyzes the GTP-dependent ribosomal translocation step during translation elongation. During this step, the ribosome changes from the pre-translocational (PRE) to the post-translocational (POST) state as the newly formed A-site-bound peptidyl-tRNA and P-site-bound deacylated tRNA move to the P and E sites, respectively. Catalyzes the coordinated movement of the two tRNA molecules, the mRNA and conformational changes in the ribosome. The chain is Elongation factor G from Frankia casuarinae (strain DSM 45818 / CECT 9043 / HFP020203 / CcI3).